The chain runs to 883 residues: Phosphoenolpyruvate carboxylase (883 aa).

Active-site residues include histidine 138 and lysine 546.

The protein belongs to the PEPCase type 1 family. Mg(2+) serves as cofactor.

It carries out the reaction oxaloacetate + phosphate = phosphoenolpyruvate + hydrogencarbonate. Its function is as follows. Forms oxaloacetate, a four-carbon dicarboxylic acid source for the tricarboxylic acid cycle. This Escherichia coli O45:K1 (strain S88 / ExPEC) protein is Phosphoenolpyruvate carboxylase.